The primary structure comprises 311 residues: Urease accessory protein UreD 3 (311 aa).

This sequence belongs to the UreD family. As to quaternary structure, ureD, UreF and UreG form a complex that acts as a GTP-hydrolysis-dependent molecular chaperone, activating the urease apoprotein by helping to assemble the nickel containing metallocenter of UreC. The UreE protein probably delivers the nickel.

The protein localises to the cytoplasm. In terms of biological role, required for maturation of urease via the functional incorporation of the urease nickel metallocenter. The protein is Urease accessory protein UreD 3 of Methylorubrum populi (strain ATCC BAA-705 / NCIMB 13946 / BJ001) (Methylobacterium populi).